The primary structure comprises 197 residues: Interleukin-17C (197 aa).

The N-terminal stretch at 1–18 is a signal peptide; the sequence is MTLLPGLLFLTWLHTCLA. 2 disulfide bridges follow: cysteine 129/cysteine 189 and cysteine 134/cysteine 191.

It belongs to the IL-17 family. Binds to a heterodimer formed by IL17RA and IL17RE.

It is found in the secreted. In terms of biological role, cytokine that plays a crucial role in innate immunity of the epithelium, including to intestinal bacterial pathogens, in an autocrine manner. Stimulates the production of antibacterial peptides and pro-inflammatory molecules for host defense by signaling through the NF-kappa-B and MAPK pathways. Acts synergically with IL22 in inducing the expression of antibacterial peptides, including S100A8, S100A9, REG3A and REG3G. Synergy is also observed with TNF and IL1B in inducing DEFB2 from keratinocytes. Depending on the type of insult, may have both protective and pathogenic properties, either by maintaining epithelial homeostasis after an inflammatory challenge or by promoting inflammatory phenotype. Enhanced IL17C/IL17RE signaling may also lead to greater susceptibility to autoimmune diseases. In Homo sapiens (Human), this protein is Interleukin-17C (IL17C).